We begin with the raw amino-acid sequence, 105 residues long: Circadian clock oscillator protein KaiB1 (105 aa).

This sequence belongs to the KaiB family. As to quaternary structure, homotetramer in solution and crystals formed by 2 dimers. Only elutes as a homotetramer in size exclusion chromatography, interacts with KaiC1 and KaiC3. The KaiABC complex composition changes during the circadian cycle to control KaiC phosphorylation. Complexes KaiC(6), KaiA(2-4):KaiC(6), KaiB(6):KaiC(6) and KaiC(6):KaiB(6):KaiA(12) are among the most important forms, many form cooperatively. Undergoes a major conformational rearrangment; in the free state forms homotetramers as a dimer of dimers. When bound to the CI domain of KaiC switches to a monomeric thioredoxin-fold (KaiB(fs)). KaiB(fs) binds CikA, leading it to dephosphorylate phospho-RpaA.

Key component of the KaiABC oscillator complex, which constitutes the main circadian regulator in cyanobacteria. Complex composition changes during the circadian cycle to control KaiC phosphorylation. KaiA stimulates KaiC autophosphorylation, while KaiB sequesters KaiA, leading to KaiC autodephosphorylation. Phospho-Ser-431 KaiC accumulation triggers binding of KaiB to form the KaiB(6):KaiC(6) complex, leading to changes in output regulators CikA and SasA. KaiB switches to a thioredoxin-like fold (KaiB(fs)) when bound to KaiC. KaiB(6):KaiC(6) formation exposes a site for KaiA binding that sequesters KaiA from KaiC, making the KaiC(6):KaiB(6):KaiA(12) complex that results in KaiC autodephosphorylation. Its function is as follows. Component of the oscillator and circadian clock in this organism, enhances fitness in a rhythmic environment. The homotetramer reduces the ATPase activity of KaiC3 by 35%. In terms of biological role, a metamorphic protein which reversibly switches between an inactive tetrameric fold and a rare, thioredoxin-like monomeric fold (KaiB(fs)). KaiB(fs) binds phospho-KaiC, KaiA and CikA. KaiA and CikA compete for binding to KaiB(fs), and KaiB(fs) and SasA compete for binding to KaiC, thus the clock oscillator and output signal pathway are tightly coupled. The polypeptide is Circadian clock oscillator protein KaiB1 (Synechocystis sp. (strain ATCC 27184 / PCC 6803 / Kazusa)).